A 90-amino-acid polypeptide reads, in one-letter code: UPF0729 protein Bm1_03610 (90 aa).

It belongs to the UPF0729 family.

The chain is UPF0729 protein Bm1_03610 from Brugia malayi (Filarial nematode worm).